The sequence spans 499 residues: Calcium/calmodulin-dependent protein kinase type II subunit delta (499 aa).

A2 carries the post-translational modification N-acetylalanine. In terms of domain architecture, Protein kinase spans 14–272; sequence YQLFEELGKG…ASEALKHPWI (259 aa). Residues 20-28 and K43 contribute to the ATP site; that span reads LGKGAFSVV. D136 serves as the catalytic Proton acceptor. The tract at residues 283-292 is autoinhibitory domain; sequence HRQETVDCLK. T287 is modified (phosphothreonine; by autocatalysis). Residues 291 to 301 are calmodulin-binding; sequence LKKFNARRKLK. Phosphothreonine; by autocatalysis is present on residues T306 and T307. S315 is modified (phosphoserine). K318 is modified (N6-acetyllysine). S319 and S330 each carry phosphoserine. A Phosphothreonine modification is found at T331. S333 is modified (phosphoserine). A phosphothreonine mark is found at T336 and T337. 3 positions are modified to phosphoserine: S404, S490, and S494.

Belongs to the protein kinase superfamily. CAMK Ser/Thr protein kinase family. CaMK subfamily. In terms of assembly, CAMK2 is composed of 4 different chains: alpha (CAMK2A), beta (CAMK2B), gamma (CAMK2G), and delta (CAMK2D). The different isoforms assemble into homo- or heteromultimeric holoenzymes composed of 12 subunits with two hexameric rings stacked one on top of the other. Interacts with RRAD CACNB2. Autophosphorylation of Thr-287 following activation by Ca(2+)/calmodulin. Phosphorylation of Thr-287 locks the kinase into an activated state.

The protein resides in the cell membrane. It is found in the sarcolemma. The protein localises to the sarcoplasmic reticulum membrane. The enzyme catalyses L-seryl-[protein] + ATP = O-phospho-L-seryl-[protein] + ADP + H(+). It carries out the reaction L-threonyl-[protein] + ATP = O-phospho-L-threonyl-[protein] + ADP + H(+). Its activity is regulated as follows. Activated by Ca(2+)/calmodulin. Binding of calmodulin results in conformational change that relieves intrasteric autoinhibition and allows autophosphorylation of Thr-287 which turns the kinase in a constitutively active form and confers to the kinase a Ca(2+)-independent activity. In terms of biological role, calcium/calmodulin-dependent protein kinase involved in the regulation of Ca(2+) homeostatis and excitation-contraction coupling (ECC) in heart by targeting ion channels, transporters and accessory proteins involved in Ca(2+) influx into the myocyte, Ca(2+) release from the sarcoplasmic reticulum (SR), SR Ca(2+) uptake and Na(+) and K(+) channel transport. Targets also transcription factors and signaling molecules to regulate heart function. In its activated form, is involved in the pathogenesis of dilated cardiomyopathy and heart failure. Contributes to cardiac decompensation and heart failure by regulating SR Ca(2+) release via direct phosphorylation of RYR2 Ca(2+) channel on 'Ser-2808'. In the nucleus, phosphorylates the MEF2 repressor HDAC4, promoting its nuclear export and binding to 14-3-3 protein, and expression of MEF2 and genes involved in the hypertrophic program. Is essential for left ventricular remodeling responses to myocardial infarction. In pathological myocardial remodeling acts downstream of the beta adrenergic receptor signaling cascade to regulate key proteins involved in ECC. Regulates Ca(2+) influx to myocytes by binding and phosphorylating the L-type Ca(2+) channel subunit beta-2 CACNB2. In addition to Ca(2+) channels, can target and regulate the cardiac sarcolemmal Na(+) channel Nav1.5/SCN5A and the K+ channel Kv4.3/KCND3, which contribute to arrhythmogenesis in heart failure. Phosphorylates phospholamban (PLN/PLB), an endogenous inhibitor of SERCA2A/ATP2A2, contributing to the enhancement of SR Ca(2+) uptake that may be important in frequency-dependent acceleration of relaxation (FDAR) and maintenance of contractile function during acidosis. May participate in the modulation of skeletal muscle function in response to exercise, by regulating SR Ca(2+) transport through phosphorylation of PLN/PLB and triadin, a ryanodine receptor-coupling factor. In response to interferon-gamma (IFN-gamma) stimulation, catalyzes phosphorylation of STAT1, stimulating the JAK-STAT signaling pathway. The polypeptide is Calcium/calmodulin-dependent protein kinase type II subunit delta (CAMK2D) (Sus scrofa (Pig)).